The primary structure comprises 244 residues: MILTVDVGNTRIKAAVFEGSSVLEYFVFEKNELEKRIEKILEKFPNCSDLVVASVGDVEKQSFLSFEKQLNVHFFTHEDIFPFHNKYATPKTLGIDRMILAAGATLQFPKQNRLVIDAGTCITYDFIDENDNYLGGAISPGLRLRYETLHNYTARLPLLTLDQPHSYIGDSTAQAIHSGVVNGFVYEIDGFIDEYRSNFSNFIIILTGGDAEFLAKRLKNTIFANSNFLLESLSQTYQYKIDND.

6–13 lines the ATP pocket; that stretch reads DVGNTRIK. Substrate is bound by residues Y87 and 94–97; that span reads GIDR. D96 functions as the Proton acceptor in the catalytic mechanism. D117 is a binding site for K(+). Residue T120 participates in ATP binding. Substrate is bound at residue T172.

Belongs to the type III pantothenate kinase family. Homodimer. The cofactor is NH4(+). K(+) is required as a cofactor.

The protein resides in the cytoplasm. It carries out the reaction (R)-pantothenate + ATP = (R)-4'-phosphopantothenate + ADP + H(+). It participates in cofactor biosynthesis; coenzyme A biosynthesis; CoA from (R)-pantothenate: step 1/5. In terms of biological role, catalyzes the phosphorylation of pantothenate (Pan), the first step in CoA biosynthesis. The sequence is that of Type III pantothenate kinase from Flavobacterium johnsoniae (strain ATCC 17061 / DSM 2064 / JCM 8514 / BCRC 14874 / CCUG 350202 / NBRC 14942 / NCIMB 11054 / UW101) (Cytophaga johnsonae).